The primary structure comprises 166 residues: 2-amino-4-hydroxy-6-hydroxymethyldihydropteridine pyrophosphokinase (166 aa).

It belongs to the HPPK family.

The enzyme catalyses 6-hydroxymethyl-7,8-dihydropterin + ATP = (7,8-dihydropterin-6-yl)methyl diphosphate + AMP + H(+). The protein operates within cofactor biosynthesis; tetrahydrofolate biosynthesis; 2-amino-4-hydroxy-6-hydroxymethyl-7,8-dihydropteridine diphosphate from 7,8-dihydroneopterin triphosphate: step 4/4. Catalyzes the transfer of pyrophosphate from adenosine triphosphate (ATP) to 6-hydroxymethyl-7,8-dihydropterin, an enzymatic step in folate biosynthesis pathway. The polypeptide is 2-amino-4-hydroxy-6-hydroxymethyldihydropteridine pyrophosphokinase (folK) (Streptococcus pyogenes serotype M1).